Reading from the N-terminus, the 114-residue chain is Procyclic form-specific polypeptide A-alpha (114 aa).

Residues 1–27 form the signal peptide; that stretch reads MAPRSLYLLAILLFSANLFAGVGFAAA. Positions 33–95 are disordered; the sequence is SNVIVKGGKG…EPEPEPGAAT (63 aa). Positions 47–89 are enriched in acidic residues; it reads DGPEEPEETGPEETGPEETGPEETGPEETGPEETGPEETEPEP. 7 consecutive repeat copies span residues 48 to 52, 56 to 60, 61 to 65, 66 to 70, 71 to 75, 76 to 80, and 81 to 85. Positions 48–85 are 7 X 5 AA tandem repeats of G-P-E-E-[PT]; it reads GPEEPEETGPEETGPEETGPEETGPEETGPEETGPEET. Glycine 92 carries the GPI-anchor amidated glycine lipid modification. A propeptide spanning residues 93–114 is cleaved from the precursor; it reads AATLKSVALPFAVAAAALVAAF.

Its subcellular location is the cell membrane. Major surface antigen of procyclic forms. The polypeptide is Procyclic form-specific polypeptide A-alpha (PARPA-ALPHA) (Trypanosoma brucei brucei).